The chain runs to 98 residues: C-X-C motif chemokine 10 (98 aa).

A signal peptide spans 1-21 (MNQTAILICCLIFLTLSGIQG). Position 26 is a citrulline; by PAD2 (R26). 2 disulfide bridges follow: C30/C57 and C32/C74.

It belongs to the intercrine alpha (chemokine CxC) family. In terms of assembly, monomer, dimer, and tetramer. Interacts with CXCR3 (via N-terminus). In terms of processing, several proteases can mediate post-secretion cleavages. DPP4 cleaves CXCL10 on its N-terminal 2 amino acids leading to an antagonist form of CXCL10. This dominant negative form is capable of binding CXCR3 but does not induce signaling. MMP9 cleaves 9 amino acids instead. As to expression, mainly secreted by monocytes, endothelial cells as well as fibroblasts. Expressed by epithelial cells in thymus. Microglial cells produce CXCL10 in response to viral stimulation.

It is found in the secreted. Its function is as follows. Pro-inflammatory cytokine that is involved in a wide variety of processes such as chemotaxis, differentiation, and activation of peripheral immune cells, regulation of cell growth, apoptosis and modulation of angiostatic effects. Plays thereby an important role during viral infections by stimulating the activation and migration of immune cells to the infected sites. Mechanistically, binding of CXCL10 to the CXCR3 receptor activates G protein-mediated signaling and results in downstream activation of phospholipase C-dependent pathway, an increase in intracellular calcium production and actin reorganization. In turn, recruitment of activated Th1 lymphocytes occurs at sites of inflammation. Activation of the CXCL10/CXCR3 axis also plays an important role in neurons in response to brain injury for activating microglia, the resident macrophage population of the central nervous system, and directing them to the lesion site. This recruitment is an essential element for neuronal reorganization. The protein is C-X-C motif chemokine 10 (CXCL10) of Homo sapiens (Human).